A 207-amino-acid polypeptide reads, in one-letter code: Large ribosomal subunit protein uL4 (207 aa).

Residues 50–76 (AVKNRSAVSGGGRKPWKQKGTGRARQG) are disordered.

Belongs to the universal ribosomal protein uL4 family. In terms of assembly, part of the 50S ribosomal subunit.

One of the primary rRNA binding proteins, this protein initially binds near the 5'-end of the 23S rRNA. It is important during the early stages of 50S assembly. It makes multiple contacts with different domains of the 23S rRNA in the assembled 50S subunit and ribosome. In terms of biological role, forms part of the polypeptide exit tunnel. The protein is Large ribosomal subunit protein uL4 of Staphylococcus aureus (strain MRSA252).